Reading from the N-terminus, the 123-residue chain is Small ribosomal subunit protein uS12 (123 aa).

The segment at 1 to 47 is disordered; the sequence is MPTINQLVRKGRKKAEKKQSTPALKGGPQKRGVCTRVYTSTPKKPNS. 3-methylthioaspartic acid is present on Asp89.

This sequence belongs to the universal ribosomal protein uS12 family. As to quaternary structure, part of the 30S ribosomal subunit. Contacts proteins S8 and S17. May interact with IF1 in the 30S initiation complex.

In terms of biological role, with S4 and S5 plays an important role in translational accuracy. Functionally, interacts with and stabilizes bases of the 16S rRNA that are involved in tRNA selection in the A site and with the mRNA backbone. Located at the interface of the 30S and 50S subunits, it traverses the body of the 30S subunit contacting proteins on the other side and probably holding the rRNA structure together. The combined cluster of proteins S8, S12 and S17 appears to hold together the shoulder and platform of the 30S subunit. This Desulforapulum autotrophicum (strain ATCC 43914 / DSM 3382 / VKM B-1955 / HRM2) (Desulfobacterium autotrophicum) protein is Small ribosomal subunit protein uS12.